A 375-amino-acid polypeptide reads, in one-letter code: LIM domain-binding protein 1 (375 aa).

Disordered stretches follow at residues 248 to 294 (PPAE…TFAL) and 331 to 375 (DAAN…QASQ). The span at 266–282 (SGGSTMSSGGGNTNNSN) shows a compositional bias: low complexity. The 40-residue stretch at 300–339 (DVMVVGEPTLMGGEFGDEDERLITRLENTQFDAANGIDDE) folds into the LIM interaction domain (LID) domain.

It belongs to the LDB family. As to quaternary structure, forms homodimers and heterodimers. Interacts with the LIM domain of LIM/homeobox factor lhx1/lim1, and with lhx3/lim3 and lhx5/lim5. Activates lhx1/lim1 by binding. The stoichiometry of lhx1/lim1 and ldb1 is important for their function and an excess of ldb1 can inhibit lhx1/lim1 function. When bound to lhx1/lim1, escapes degradation by rnf12. The N-terminus interacts with the N-terminal region of rnf12. Undergoes rnf12-mediated ubiquitin-proteasome-dependent degradation. Ubiquitously expressed in the early gastrula before localizing to the dorsal region of the vegetal hemisphere, which contains the Spemann organizer. Expressed in the CNS, pronephros and tail bud in neurula and tail-bud stage embryos. Expressed in multiple adult tissues including brain, heart, lung, stomach, intestine, liver, spleen, kidney, ovary, muscle and skin.

It localises to the nucleus. Binds to the LIM domain of a wide variety of LIM domain-containing transcription factors. Acts as a coactivator together with otx2 to stimulate lhx1/lim1-mediated activation of the gsc promoter in the Spemann organizer. Acts synergistically with lhx1/lim1 and ssbp in axis formation. This Xenopus laevis (African clawed frog) protein is LIM domain-binding protein 1 (ldb1).